Reading from the N-terminus, the 160-residue chain is Baculoviral IAP repeat-containing protein 5.1-A (160 aa).

The stretch at 27 to 97 (RLATFADWPF…KRSANCGFLS (71 aa)) is one BIR repeat. Threonine 43 carries the phosphothreonine; by CDK1 modification. Cysteine 66, cysteine 69, histidine 86, and cysteine 93 together coordinate Zn(2+).

This sequence belongs to the IAP family. In terms of assembly, component of the CPC at least composed of survivin/birc5, incenp, cdca8/borealin and/or cdca9/dasra-A, and aurkb/aurora-B. Interacts directly with incenp (via N-terminus), and may weakly interact with aurkb (via N-terminus) to stabilize the complex. Interacts with GTP-bound ran in both the S and M phases of the cell cycle. Also found in a complex with ubiquitin-mediated signaling proteins including at least usp9x/xFAM, nploc4/npl4 and ufd1. In terms of processing, ubiquitination is required for centrosome-targeting.

The protein localises to the cytoplasm. It localises to the nucleus. The protein resides in the chromosome. It is found in the centromere. Its subcellular location is the cytoskeleton. The protein localises to the spindle. In terms of biological role, component of the chromosomal passenger complex (CPC), a complex that acts as a key regulator of mitosis. The CPC complex has essential functions at the centromere in ensuring correct chromosome alignment and segregation and is required for chromatin-induced microtubule stabilization and spindle assembly. Stimulates the mitotic kinase activity of aurkb/aurora-B in the CPC. Does not appear to exhibit anti-apoptotic activity. The protein is Baculoviral IAP repeat-containing protein 5.1-A (birc5.1-a) of Xenopus laevis (African clawed frog).